Consider the following 346-residue polypeptide: Uroporphyrinogen decarboxylase (346 aa).

Residues 21-25 (RQAGR), aspartate 71, tyrosine 146, serine 201, and histidine 316 each bind substrate.

This sequence belongs to the uroporphyrinogen decarboxylase family. In terms of assembly, homodimer.

It is found in the cytoplasm. The enzyme catalyses uroporphyrinogen III + 4 H(+) = coproporphyrinogen III + 4 CO2. It functions in the pathway porphyrin-containing compound metabolism; protoporphyrin-IX biosynthesis; coproporphyrinogen-III from 5-aminolevulinate: step 4/4. Its function is as follows. Catalyzes the decarboxylation of four acetate groups of uroporphyrinogen-III to yield coproporphyrinogen-III. This Rickettsia africae (strain ESF-5) protein is Uroporphyrinogen decarboxylase.